Here is a 333-residue protein sequence, read N- to C-terminus: MKGKLLKGVLSLGVGLGALYSGTSAQAEASTNQNDTLKVMTHNVYMLSTNLYPNWGQTERADLIGAADYIKNQDVVILNEVFDNSASDRLLGNLKKEYPNQTAVLGRSSGSEWDKTLGNYSSSTPEDGGVAIVSKWPIAEKIQYVFAKGCGPDNLSNKGFVYTKIKKNDRFVHVIGTHLQAEDSMCGKTSPASVRTNQLKEIQDFIKNKNIPNNEYVLIGGDMNVNKINAENNNDSEYASMFKTLNASVPSYTGHTATWDATTNSIAKYNFPDSPAEYLDYIIASKDHANPSYIENKVLQPKSPQWTVTSWFQKYTYNDYSDDYPVEATISMK.

A signal peptide spans 1-27 (MKGKLLKGVLSLGVGLGALYSGTSAQA). Residues Cys150 and Cys186 are joined by a disulfide bond.

The protein belongs to the neutral sphingomyelinase family. The cofactor is Mg(2+).

The protein localises to the secreted. The enzyme catalyses a sphingomyelin + H2O = phosphocholine + an N-acylsphing-4-enine + H(+). Activated by cobalt and manganese ions. Functionally, required, with sphingomyelinase, to effect target cell lysis (hemolysis). The polypeptide is Sphingomyelinase C (sph) (Bacillus cereus).